A 229-amino-acid chain; its full sequence is Synaptogyrin-3 (229 aa).

Position 1 is an N-acetylmethionine (Met1). The 153-residue stretch at 20–172 (FARRPQTLLR…LTVKALQRFR (153 aa)) folds into the MARVEL domain. The next 4 helical transmembrane spans lie at 30–50 (VASW…GYVN), 70–90 (FGVA…LLDV), 105–125 (VLLD…GFCF), and 148–168 (AVIT…VKAL).

The protein belongs to the synaptogyrin family. As to quaternary structure, interacts (via N-terminus) with SLC6A3 (via N-terminus). May interact with VMAT2.

It is found in the cytoplasmic vesicle. The protein resides in the secretory vesicle. It localises to the synaptic vesicle membrane. Its subcellular location is the synapse. In terms of biological role, may play a role in regulated exocytosis. May indirectly regulate the activity of the plasma membrane dopamine transporter SLC6A3 and thereby regulate dopamine transport back from the synaptic cleft into the presynaptic terminal. This Bos taurus (Bovine) protein is Synaptogyrin-3.